The following is a 236-amino-acid chain: Zinc finger AN1 domain-containing stress-associated protein 13 (236 aa).

2 disordered regions span residues 48–81 (KEGR…PGKR) and 150–173 (TVPE…AKTK). Residues 66-75 (RLQLPTTSIV) are compositionally biased toward polar residues. The AN1-type; degenerate zinc-finger motif lies at 170–216 (AKTKSRCAACGRRVGLMGFECRCGAVFCGAHPLLGQARLWLRLQGRA). Zn(2+) contacts are provided by Cys-176, Cys-179, Cys-197, and His-200.

Its function is as follows. May be involved in environmental stress response. The sequence is that of Zinc finger AN1 domain-containing stress-associated protein 13 (SAP13) from Oryza sativa subsp. japonica (Rice).